A 362-amino-acid polypeptide reads, in one-letter code: 3-isopropylmalate dehydrogenase (362 aa).

77–88 (GPKWGTGAVRPE) lines the NAD(+) pocket. Arginine 95, arginine 105, arginine 134, and aspartate 223 together coordinate substrate. Positions 223, 248, and 252 each coordinate Mg(2+). 287-298 (GSAPDLPPNKVN) contributes to the NAD(+) binding site.

Belongs to the isocitrate and isopropylmalate dehydrogenases family. As to quaternary structure, homodimer. Mg(2+) is required as a cofactor. It depends on Mn(2+) as a cofactor.

It is found in the cytoplasm. The catalysed reaction is (2R,3S)-3-isopropylmalate + NAD(+) = 4-methyl-2-oxopentanoate + CO2 + NADH. The protein operates within amino-acid biosynthesis; L-leucine biosynthesis; L-leucine from 3-methyl-2-oxobutanoate: step 3/4. Its function is as follows. Catalyzes the oxidation of 3-carboxy-2-hydroxy-4-methylpentanoate (3-isopropylmalate) to 3-carboxy-4-methyl-2-oxopentanoate. The product decarboxylates to 4-methyl-2 oxopentanoate. The protein is 3-isopropylmalate dehydrogenase (LEU2) of Blastobotrys adeninivorans (Yeast).